The sequence spans 308 residues: Bifunctional protein FolD (308 aa).

Residues Gly-175–Ser-177, Ser-200, and Ile-241 contribute to the NADP(+) site.

It belongs to the tetrahydrofolate dehydrogenase/cyclohydrolase family. As to quaternary structure, homodimer.

It catalyses the reaction (6R)-5,10-methylene-5,6,7,8-tetrahydrofolate + NADP(+) = (6R)-5,10-methenyltetrahydrofolate + NADPH. It carries out the reaction (6R)-5,10-methenyltetrahydrofolate + H2O = (6R)-10-formyltetrahydrofolate + H(+). It participates in one-carbon metabolism; tetrahydrofolate interconversion. Catalyzes the oxidation of 5,10-methylenetetrahydrofolate to 5,10-methenyltetrahydrofolate and then the hydrolysis of 5,10-methenyltetrahydrofolate to 10-formyltetrahydrofolate. The chain is Bifunctional protein FolD from Jannaschia sp. (strain CCS1).